A 107-amino-acid polypeptide reads, in one-letter code: CLAVATA3/ESR (CLE)-related protein 10 (107 aa).

Residues 1 to 23 form the signal peptide; sequence MKTNRNRPINILIVFFLLTTARA. N27 and N30 each carry an N-linked (GlcNAc...) asparagine glycan. Residues 73–107 form a disordered region; sequence SRQPLFSPPPPPTEIDQRYGVEKRLVPSGPNPLHN. The segment covering 87 to 97 has biased composition (basic and acidic residues); sequence IDQRYGVEKRL. Hydroxyproline is present on residues P99 and P102. O-linked (Ara...) hydroxyproline glycosylation occurs at P102.

This sequence belongs to the CLV3/ESR signal peptide family. In terms of processing, the O-glycosylation (arabinosylation) of the hydroxyproline Pro-102 enhances binding affinity of the CLE10p peptide for its receptor. Expressed in stems, apex, leaves, flowers, siliques and pollen.

It localises to the secreted. It is found in the extracellular space. Functionally, extracellular signal peptide that regulates cell fate. Represses root apical meristem maintenance. Regulates the transition of protophloem cells from proliferation to differentiation, thus impinging on postembryonic growth capacity of the root meristem; this signaling pathway requires CRN and CLV2. This is CLAVATA3/ESR (CLE)-related protein 10 from Arabidopsis thaliana (Mouse-ear cress).